Here is a 108-residue protein sequence, read N- to C-terminus: Thiosulfate sulfurtransferase GlpE (108 aa).

In terms of domain architecture, Rhodanese spans 17–105; sequence HQGAAVLVDI…WHRHFPADVA (89 aa). Residue Cys-65 is the Cysteine persulfide intermediate of the active site.

It belongs to the GlpE family.

The protein localises to the cytoplasm. The enzyme catalyses thiosulfate + hydrogen cyanide = thiocyanate + sulfite + 2 H(+). It carries out the reaction thiosulfate + [thioredoxin]-dithiol = [thioredoxin]-disulfide + hydrogen sulfide + sulfite + 2 H(+). In terms of biological role, transferase that catalyzes the transfer of sulfur from thiosulfate to thiophilic acceptors such as cyanide or dithiols. May function in a CysM-independent thiosulfate assimilation pathway by catalyzing the conversion of thiosulfate to sulfite, which can then be used for L-cysteine biosynthesis. This is Thiosulfate sulfurtransferase GlpE from Salmonella arizonae (strain ATCC BAA-731 / CDC346-86 / RSK2980).